A 119-amino-acid chain; its full sequence is Large ribosomal subunit protein bL20 (119 aa).

This sequence belongs to the bacterial ribosomal protein bL20 family.

Functionally, binds directly to 23S ribosomal RNA and is necessary for the in vitro assembly process of the 50S ribosomal subunit. It is not involved in the protein synthesizing functions of that subunit. This Bacillus licheniformis (strain ATCC 14580 / DSM 13 / JCM 2505 / CCUG 7422 / NBRC 12200 / NCIMB 9375 / NCTC 10341 / NRRL NRS-1264 / Gibson 46) protein is Large ribosomal subunit protein bL20.